The primary structure comprises 103 residues: Large ribosomal subunit protein eL43 (103 aa).

The protein belongs to the eukaryotic ribosomal protein eL43 family.

The sequence is that of Large ribosomal subunit protein eL43 (RPL37A) from Tetrahymena thermophila (strain SB210).